We begin with the raw amino-acid sequence, 186 residues long: Elongation factor P (186 aa).

This sequence belongs to the elongation factor P family.

It localises to the cytoplasm. The protein operates within protein biosynthesis; polypeptide chain elongation. Involved in peptide bond synthesis. Stimulates efficient translation and peptide-bond synthesis on native or reconstituted 70S ribosomes in vitro. Probably functions indirectly by altering the affinity of the ribosome for aminoacyl-tRNA, thus increasing their reactivity as acceptors for peptidyl transferase. The protein is Elongation factor P of Brucella canis (strain ATCC 23365 / NCTC 10854 / RM-666).